The primary structure comprises 351 residues: Histidinol-phosphate aminotransferase (351 aa).

An N6-(pyridoxal phosphate)lysine modification is found at Lys-213.

Belongs to the class-II pyridoxal-phosphate-dependent aminotransferase family. Histidinol-phosphate aminotransferase subfamily. Homodimer. Pyridoxal 5'-phosphate serves as cofactor.

It catalyses the reaction L-histidinol phosphate + 2-oxoglutarate = 3-(imidazol-4-yl)-2-oxopropyl phosphate + L-glutamate. The enzyme catalyses L-histidine + 2-oxoglutarate = 3-(imidazol-5-yl)pyruvate + L-glutamate. It participates in amino-acid biosynthesis; L-histidine biosynthesis; L-histidine from 5-phospho-alpha-D-ribose 1-diphosphate: step 7/9. This Caldanaerobacter subterraneus subsp. tengcongensis (strain DSM 15242 / JCM 11007 / NBRC 100824 / MB4) (Thermoanaerobacter tengcongensis) protein is Histidinol-phosphate aminotransferase.